The primary structure comprises 364 residues: Methylthioribose-1-phosphate isomerase (364 aa).

Substrate is bound by residues 49-51 (RGA), arginine 89, and glutamine 201. Aspartate 242 functions as the Proton donor in the catalytic mechanism. 252–253 (NK) contacts substrate.

The protein belongs to the eIF-2B alpha/beta/delta subunits family. MtnA subfamily.

It catalyses the reaction 5-(methylsulfanyl)-alpha-D-ribose 1-phosphate = 5-(methylsulfanyl)-D-ribulose 1-phosphate. It participates in amino-acid biosynthesis; L-methionine biosynthesis via salvage pathway; L-methionine from S-methyl-5-thio-alpha-D-ribose 1-phosphate: step 1/6. Functionally, catalyzes the interconversion of methylthioribose-1-phosphate (MTR-1-P) into methylthioribulose-1-phosphate (MTRu-1-P). This chain is Methylthioribose-1-phosphate isomerase, found in Leptospira interrogans serogroup Icterohaemorrhagiae serovar copenhageni (strain Fiocruz L1-130).